The chain runs to 55 residues: Trypsin inhibitor ClTI-1 (55 aa).

The 55-residue stretch at 1 to 55 (SIPPACDKYSRLPGCPRDYSPVCGTDGKTYPNECVLCLSNSEENKNVQIYKSGMC) folds into the Kazal-like domain. 3 cysteine pairs are disulfide-bonded: cysteine 6–cysteine 37, cysteine 15–cysteine 34, and cysteine 23–cysteine 55.

It localises to the secreted. Inhibits trypsin and plasmin. The chain is Trypsin inhibitor ClTI-1 from Gallus gallus (Chicken).